The primary structure comprises 192 residues: Ion-translocating oxidoreductase complex subunit A (192 aa).

A run of 6 helical transmembrane segments spans residues 5–25 (LLLL…FLGL), 39–59 (IGMS…SYLV), 65–85 (LPFD…AVVV), 102–122 (ALGI…VALL), 134–154 (AIFG…FSAM), and 171–191 (AIAM…TGLV).

This sequence belongs to the NqrDE/RnfAE family. As to quaternary structure, the complex is composed of six subunits: RnfA, RnfB, RnfC, RnfD, RnfE and RnfG.

The protein resides in the cell inner membrane. Part of a membrane-bound complex that couples electron transfer with translocation of ions across the membrane. The sequence is that of Ion-translocating oxidoreductase complex subunit A from Shewanella piezotolerans (strain WP3 / JCM 13877).